Reading from the N-terminus, the 393-residue chain is Riboflavin biosynthesis protein RibBA (393 aa).

The segment at 1–200 (MEFDEIKDAL…IESLVNYQKD (200 aa)) is DHBP synthase. D-ribulose 5-phosphate is bound by residues 27–28 (RE), Asp-32, 139–143 (RTGHT), and Glu-163. Glu-28 provides a ligand contact to Mg(2+). His-142 is a Mg(2+) binding site. A GTP cyclohydrolase II region spans residues 201 to 393 (KDTSVELKAK…TKKIKMGHLI (193 aa)). Residue 249 to 253 (RIHSA) participates in GTP binding. 3 residues coordinate Zn(2+): Cys-254, Cys-265, and Cys-267. GTP is bound by residues Gln-270, 291–293 (EGR), and Thr-313. Asp-325 functions as the Proton acceptor; for GTP cyclohydrolase activity in the catalytic mechanism. The active-site Nucleophile; for GTP cyclohydrolase activity is Arg-327. Positions 348 and 353 each coordinate GTP.

In the N-terminal section; belongs to the DHBP synthase family. This sequence in the C-terminal section; belongs to the GTP cyclohydrolase II family. Mg(2+) serves as cofactor. Mn(2+) is required as a cofactor. The cofactor is Zn(2+).

The catalysed reaction is D-ribulose 5-phosphate = (2S)-2-hydroxy-3-oxobutyl phosphate + formate + H(+). The enzyme catalyses GTP + 4 H2O = 2,5-diamino-6-hydroxy-4-(5-phosphoribosylamino)-pyrimidine + formate + 2 phosphate + 3 H(+). It participates in cofactor biosynthesis; riboflavin biosynthesis; 2-hydroxy-3-oxobutyl phosphate from D-ribulose 5-phosphate: step 1/1. The protein operates within cofactor biosynthesis; riboflavin biosynthesis; 5-amino-6-(D-ribitylamino)uracil from GTP: step 1/4. Its function is as follows. Catalyzes the conversion of D-ribulose 5-phosphate to formate and 3,4-dihydroxy-2-butanone 4-phosphate. In terms of biological role, catalyzes the conversion of GTP to 2,5-diamino-6-ribosylamino-4(3H)-pyrimidinone 5'-phosphate (DARP), formate and pyrophosphate. This is Riboflavin biosynthesis protein RibBA from Staphylococcus haemolyticus (strain JCSC1435).